A 248-amino-acid chain; its full sequence is Coenzyme F420:L-glutamate ligase (248 aa).

GTP-binding positions include 15 to 18 (IPLI), 45 to 46 (ET), and Lys-50. Residue Asp-115 coordinates a divalent metal cation. Asn-118 serves as a coordination point for GTP. Residues Asp-155, Ser-156, and Gln-213 each contribute to the a divalent metal cation site. Residue 211-218 (MGQSNEGI) coordinates GTP.

Belongs to the CofE family. Homodimer. Mg(2+) serves as cofactor. Requires Mn(2+) as cofactor. K(+) is required as a cofactor.

The catalysed reaction is oxidized coenzyme F420-0 + GTP + L-glutamate = oxidized coenzyme F420-1 + GDP + phosphate + H(+). It carries out the reaction oxidized coenzyme F420-1 + GTP + L-glutamate = oxidized coenzyme F420-2 + GDP + phosphate + H(+). The protein operates within cofactor biosynthesis; coenzyme F420 biosynthesis. Functionally, catalyzes the GTP-dependent successive addition of two or more gamma-linked L-glutamates to the L-lactyl phosphodiester of 7,8-didemethyl-8-hydroxy-5-deazariboflavin (F420-0) to form coenzyme F420-0-glutamyl-glutamate (F420-2) or polyglutamated F420 derivatives. The sequence is that of Coenzyme F420:L-glutamate ligase from Methanococcus maripaludis (strain C7 / ATCC BAA-1331).